We begin with the raw amino-acid sequence, 284 residues long: NAD kinase (284 aa).

Residue Asp60 is the Proton acceptor of the active site. NAD(+) is bound by residues 60–61 (DG), 134–135 (ND), Lys145, Arg162, Asp164, and Gln235.

The protein belongs to the NAD kinase family. A divalent metal cation serves as cofactor.

Its subcellular location is the cytoplasm. It carries out the reaction NAD(+) + ATP = ADP + NADP(+) + H(+). Functionally, involved in the regulation of the intracellular balance of NAD and NADP, and is a key enzyme in the biosynthesis of NADP. Catalyzes specifically the phosphorylation on 2'-hydroxyl of the adenosine moiety of NAD to yield NADP. The chain is NAD kinase from Treponema denticola (strain ATCC 35405 / DSM 14222 / CIP 103919 / JCM 8153 / KCTC 15104).